We begin with the raw amino-acid sequence, 88 residues long: UPF0297 protein GTNG_2488 (88 aa).

It belongs to the UPF0297 family.

The polypeptide is UPF0297 protein GTNG_2488 (Geobacillus thermodenitrificans (strain NG80-2)).